A 548-amino-acid polypeptide reads, in one-letter code: Rhodopsin kinase grk7-b (548 aa).

Ser-33 is modified (phosphoserine; by PKA). One can recognise an RGS domain in the interval 53 to 172 (FEDICEQQPI…QTSLFFDRFV (120 aa)). In terms of domain architecture, Protein kinase spans 187–446 (FYEFRTLGKG…NDDPRKHEFF (260 aa)). Residues 193-201 (LGKGGFGEV) and Lys-216 each bind ATP. Residue Asp-312 is the Proton acceptor of the active site. The AGC-kinase C-terminal domain occupies 447–512 (KSINFPRLEA…GVVPIAWQQE (66 aa)). Positions 520–548 (DELSDPNRKESAAGLEDEEQQKSKSCTLL) are disordered. At Cys-545 the chain carries Cysteine methyl ester. Cys-545 carries the S-geranylgeranyl cysteine lipid modification. Positions 546 to 548 (TLL) are cleaved as a propeptide — removed in mature form.

This sequence belongs to the protein kinase superfamily. AGC Ser/Thr protein kinase family. GPRK subfamily. Post-translationally, phosphorylation at Ser-33 is regulated by light and activated by cAMP. Expressed in the eyes (at protein level). Expressed in the eyes, the pineal gland and in the brain.

Its subcellular location is the membrane. The enzyme catalyses L-threonyl-[rhodopsin] + ATP = O-phospho-L-threonyl-[rhodopsin] + ADP + H(+). It carries out the reaction L-seryl-[rhodopsin] + ATP = O-phospho-L-seryl-[rhodopsin] + ADP + H(+). Functionally, retina-specific kinase involved in the shutoff of the photoresponse and adaptation to changing light conditions via cone opsin phosphorylation, including rhodopsin (RHO). The sequence is that of Rhodopsin kinase grk7-b (grk7b) from Danio rerio (Zebrafish).